We begin with the raw amino-acid sequence, 237 residues long: Sugar fermentation stimulation protein homolog (237 aa).

The protein belongs to the SfsA family.

The chain is Sugar fermentation stimulation protein homolog from Pseudomonas fluorescens (strain Pf0-1).